A 466-amino-acid chain; its full sequence is Alpha-1A adrenergic receptor (466 aa).

The Extracellular portion of the chain corresponds to 1–27 (MVFLSGNASDSSNCTHPPPPVNISKAI). N-linked (GlcNAc...) asparagine glycosylation is found at Asn-7, Asn-13, and Asn-22. A helical transmembrane segment spans residues 28–51 (LLGVILGGLILFGVLGNILVILSV). Over 52-64 (ACHRHLHSVTHYY) the chain is Cytoplasmic. Residues 65-88 (IVNLAVADLLLTSTVLPFSAIFEI) form a helical membrane-spanning segment. Residues 89–99 (LGYWAFGRVFC) are Extracellular-facing. Cys-99 and Cys-176 are joined by a disulfide. Residues 100–122 (NVWAAVDVLCCTASIMGLCIISI) traverse the membrane as a helical segment. Residues 123–143 (DRYIGVSYPLRYPTIVTQKRG) lie on the Cytoplasmic side of the membrane. A helical transmembrane segment spans residues 144–167 (LMALLCVWALSLVISIGPLFGWRQ). The Extracellular segment spans residues 168 to 181 (PAPEDETICQINEE). The chain crosses the membrane as a helical span at residues 182 to 205 (PGYVLFSALGSFYVPLTIILVMYC). At 206–273 (RVYVVAKRES…FSREKKAAKT (68 aa)) the chain is on the cytoplasmic side. Ser-215 is modified (phosphoserine; by PKA). Residues 274–297 (LGIVVGCFVLCWLPFFLVMPIGSF) traverse the membrane as a helical segment. The Extracellular segment spans residues 298–305 (FPDFRPSE). A helical transmembrane segment spans residues 306-329 (TVFKIAFWLGYLNSCINPIIYPCS). The Cytoplasmic segment spans residues 330–466 (SQEFKKAFQN…ISLSENGEEV (137 aa)). The Nuclear localization signal signature appears at 334 to 349 (KKAFQNVLRIQCLRRK). Cys-345 carries S-palmitoyl cysteine lipidation.

Belongs to the G-protein coupled receptor 1 family. Adrenergic receptor subfamily. ADRA1A sub-subfamily. Homo- and heterooligomer. Heterooligomerizes with ADRA1B homooligomers in cardiac myocytes. Interacts with CAVIN4.

The protein localises to the nucleus membrane. Its subcellular location is the cell membrane. The protein resides in the cytoplasm. It localises to the membrane. It is found in the caveola. Its function is as follows. This alpha-adrenergic receptor mediates its action by association with G proteins that activate a phosphatidylinositol-calcium second messenger system. Its effect is mediated by G(q) and G(11) proteins. Nuclear ADRA1A-ADRA1B heterooligomers regulate phenylephrine (PE)-stimulated ERK signaling in cardiac myocytes. The chain is Alpha-1A adrenergic receptor (ADRA1A) from Bos taurus (Bovine).